A 1755-amino-acid chain; its full sequence is Transposon TyH3 Gag-Pol polyprotein (1755 aa).

Polar residues-rich tracts occupy residues 1–23 (MESQ…SVTS), 48–60 (TKAN…TPAS), and 127–152 (QSQF…GNTF). Disordered regions lie at residues 1–93 (MESQ…MMTQ), 126–173 (PQSQ…RPPP), and 352–421 (GSRN…SKST). Low complexity predominate over residues 153-165 (TDSSSADSDMTST). The interval 299 to 401 (NNGIHINNKV…NSKSKTARAH (103 aa)) is RNA-binding. Residues 402-418 (NVSTSNNSPSTDNDSIS) are compositionally biased toward low complexity. Ser-416 carries the post-translational modification Phosphoserine. Catalysis depends on Asp-461, which acts as the For protease activity; shared with dimeric partner. The segment at 583-640 (NVHTSESTRKYPYPFIHRMLAHANAQTIRYSLKNNTITYFNESDVDWSSAIDYQCPDC) is integrase-type zinc finger-like. An Integrase catalytic domain is found at 660 to 835 (NSYEPFQYLH…AGLDISTLLP (176 aa)). Mg(2+) contacts are provided by Asp-671 and Asp-736. 3 disordered regions span residues 956 to 1087 (SKAV…ETEK), 1092 to 1111 (RSPS…NIVP), and 1130 to 1187 (DLPL…DNET). Residues 960-969 (SPTDSTPPST) are compositionally biased toward low complexity. Residues 1005–1015 (STPQISNIEST) show a composition bias toward polar residues. The span at 1038 to 1053 (ESSHASKSKDFRHSDS) shows a compositional bias: basic and acidic residues. Composition is skewed to polar residues over residues 1054–1082 (YSEN…QISD) and 1101–1111 (PENNSSHNIVP). The short motif at 1178–1212 (KKRSLEDNETEIKVSRDTWNTKNMRSLEPPRSKKR) is the Bipartite nuclear localization signal element. Residues 1338-1476 (NNYYITQLDI…DILGLEIKYQ (139 aa)) form the Reverse transcriptase Ty1/copia-type domain. Residues Asp-1346, Asp-1427, Asp-1428, Asp-1610, Glu-1652, and Asp-1685 each contribute to the Mg(2+) site. The region spanning 1610–1752 (DASYGNQPYY…IKTFKLLTNK (143 aa)) is the RNase H Ty1/copia-type domain.

As to quaternary structure, the capsid protein forms a homotrimer, from which the VLPs are assembled. The protease is a homodimer, whose active site consists of two apposed aspartic acid residues. Post-translationally, initially, virus-like particles (VLPs) are composed of the structural unprocessed proteins Gag and Gag-Pol, and also contain the host initiator methionine tRNA (tRNA(i)-Met) which serves as a primer for minus-strand DNA synthesis, and a dimer of genomic Ty RNA. Processing of the polyproteins occurs within the particle and proceeds by an ordered pathway, called maturation. First, the protease (PR) is released by autocatalytic cleavage of the Gag-Pol polyprotein yielding capsid protein p45 and a Pol-p154 precursor protein. This cleavage is a prerequisite for subsequent processing of Pol-p154 at the remaining sites to release the mature structural and catalytic proteins. Maturation takes place prior to the RT reaction and is required to produce transposition-competent VLPs.

It is found in the cytoplasm. The protein localises to the nucleus. The catalysed reaction is DNA(n) + a 2'-deoxyribonucleoside 5'-triphosphate = DNA(n+1) + diphosphate. It carries out the reaction Endonucleolytic cleavage to 5'-phosphomonoester.. Capsid protein (CA) is the structural component of the virus-like particle (VLP), forming the shell that encapsulates the retrotransposons dimeric RNA genome. The particles are assembled from trimer-clustered units and there are holes in the capsid shells that allow for the diffusion of macromolecules. CA also has nucleocapsid-like chaperone activity, promoting primer tRNA(i)-Met annealing to the multipartite primer-binding site (PBS), dimerization of Ty1 RNA and initiation of reverse transcription. Its function is as follows. The aspartyl protease (PR) mediates the proteolytic cleavages of the Gag and Gag-Pol polyproteins after assembly of the VLP. Functionally, reverse transcriptase/ribonuclease H (RT) is a multifunctional enzyme that catalyzes the conversion of the retro-elements RNA genome into dsDNA within the VLP. The enzyme displays a DNA polymerase activity that can copy either DNA or RNA templates, and a ribonuclease H (RNase H) activity that cleaves the RNA strand of RNA-DNA heteroduplexes during plus-strand synthesis and hydrolyzes RNA primers. The conversion leads to a linear dsDNA copy of the retrotransposon that includes long terminal repeats (LTRs) at both ends. In terms of biological role, integrase (IN) targets the VLP to the nucleus, where a subparticle preintegration complex (PIC) containing at least integrase and the newly synthesized dsDNA copy of the retrotransposon must transit the nuclear membrane. Once in the nucleus, integrase performs the integration of the dsDNA into the host genome. This Saccharomyces cerevisiae (Baker's yeast) protein is Transposon TyH3 Gag-Pol polyprotein (TY1B).